Consider the following 270-residue polypeptide: Small ribosomal subunit protein eS1 (270 aa).

Disordered regions lie at residues 1 to 21 and 238 to 270; these read MAVGKNKGTSKGGKKGSKKKV and GGGKGAEVSTGAAEGGVTIDRPEGYEPPVQESV.

Belongs to the eukaryotic ribosomal protein eS1 family. In terms of assembly, component of the small ribosomal subunit. Mature ribosomes consist of a small (40S) and a large (60S) subunit. The 40S subunit contains about 33 different proteins and 1 molecule of RNA (18S). The 60S subunit contains about 49 different proteins and 3 molecules of RNA (28S, 5.8S and 5S).

It is found in the cytoplasm. The sequence is that of Small ribosomal subunit protein eS1 from Aedes aegypti (Yellowfever mosquito).